Consider the following 134-residue polypeptide: Aspartate 1-decarboxylase (134 aa).

Catalysis depends on Ser25, which acts as the Schiff-base intermediate with substrate; via pyruvic acid. Ser25 carries the pyruvic acid (Ser) modification. Thr57 is a binding site for substrate. The active-site Proton donor is the Tyr58. 73–75 contacts substrate; that stretch reads GAA.

It belongs to the PanD family. Heterooctamer of four alpha and four beta subunits. Pyruvate is required as a cofactor. Is synthesized initially as an inactive proenzyme, which is activated by self-cleavage at a specific serine bond to produce a beta-subunit with a hydroxyl group at its C-terminus and an alpha-subunit with a pyruvoyl group at its N-terminus.

It is found in the cytoplasm. The enzyme catalyses L-aspartate + H(+) = beta-alanine + CO2. It functions in the pathway cofactor biosynthesis; (R)-pantothenate biosynthesis; beta-alanine from L-aspartate: step 1/1. In terms of biological role, catalyzes the pyruvoyl-dependent decarboxylation of aspartate to produce beta-alanine. The sequence is that of Aspartate 1-decarboxylase from Geobacter sp. (strain M21).